The chain runs to 500 residues: Lysine--tRNA ligase (500 aa).

Positions 410 and 417 each coordinate Mg(2+).

Belongs to the class-II aminoacyl-tRNA synthetase family. Homodimer. The cofactor is Mg(2+).

The protein localises to the cytoplasm. It carries out the reaction tRNA(Lys) + L-lysine + ATP = L-lysyl-tRNA(Lys) + AMP + diphosphate. This chain is Lysine--tRNA ligase, found in Pseudomonas fluorescens (strain ATCC BAA-477 / NRRL B-23932 / Pf-5).